We begin with the raw amino-acid sequence, 102 residues long: Large ribosomal subunit protein bL21 (102 aa).

Belongs to the bacterial ribosomal protein bL21 family. As to quaternary structure, part of the 50S ribosomal subunit. Contacts protein L20.

Its function is as follows. This protein binds to 23S rRNA in the presence of protein L20. This is Large ribosomal subunit protein bL21 from Bacillus velezensis (strain DSM 23117 / BGSC 10A6 / LMG 26770 / FZB42) (Bacillus amyloliquefaciens subsp. plantarum).